The chain runs to 1286 residues: DNA-directed RNA polymerase 147 kDa polypeptide (1286 aa).

It belongs to the poxviridae DNA-directed RNA polymerase 147 kDa subunit family. The DNA-dependent RNA polymerase used for intermediate and late genes expression consists of eight subunits Rpo30/OPG66, Rpo7/OPG90, Rpo22/OPG103, Rpo147/OPG105, Rpo18/OPG119, Rpo19/OPG131, Rpo132/OPG151 and Rpo35/OPG156. The same holoenzyme, with the addition of the transcription-specificity factor OPG109, is used for early gene expression.

The protein resides in the virion. It carries out the reaction RNA(n) + a ribonucleoside 5'-triphosphate = RNA(n+1) + diphosphate. In terms of biological role, part of the DNA-dependent RNA polymerase which catalyzes the transcription of viral DNA into RNA using the four ribonucleoside triphosphates as substrates. Responsible for the transcription of early, intermediate and late genes. DNA-dependent RNA polymerase associates with the early transcription factor (ETF), itself composed of OPG118 and OPG133, thereby allowing the early genes transcription. Late transcription, and probably also intermediate transcription, require newly synthesized RNA polymerase. In Vaccinia virus (strain Ankara) (VACV), this protein is DNA-directed RNA polymerase 147 kDa polypeptide (OPG105).